The sequence spans 280 residues: Intimin (280 aa).

The Big-1 domain occupies Ile1–Phe92. The BIG2 domain maps to Ala127 to Ala173. Cys201 and Cys278 are joined by a disulfide.

The protein belongs to the intimin/invasin family.

It is found in the cell outer membrane. In terms of biological role, an inverse autotransporter. This is Intimin (eaeA) from Hafnia alvei.